A 215-amino-acid polypeptide reads, in one-letter code: UPF0502 protein YceH (215 aa).

Lysine 80 carries the post-translational modification N6-acetyllysine.

The protein belongs to the UPF0502 family.

The chain is UPF0502 protein YceH from Shigella sonnei (strain Ss046).